A 931-amino-acid chain; its full sequence is MSHPKLESSSNKEIITEEVGLLKQLLDEATQKLIGSESFDKIEKIVSLSSTDDYTGLKETISALSNEEMVIVSRYFSILPLLINISEDVDLAYEINYKNNLNQDYLGKLSTTIDVVAGHENAKDILEHVNVVPVLTAHPTQVQRKTVLELTSKIHDLLRKYRDVKAGIVNQEKWYADLRRYIGIIMQTDTIREKKLKVKNEITNVMEYYNRSLIKAVTKLTAEYKALAAKKGIHLENPKPLTMGMWIGGDRDGNPFVTAETLRLSAMVQSEVIINHYIEQLNELYRNMSLSINLTEVSPELVTLANQSQDNSVYRENEPYRKAFNFIQDKLVQTLLNLKVGSSPKEKFVSRQESSDIVGRYIKSHIAQVASDIQTEELPAYATAEEFKQDLLLVKQSLVQYGQDSLVDGELACLIQAVDIFGFYLATIDMRQDSSINEACVAELLKSANIVDDYSSLSEEEKCQLLLKELTEDPRTLSSTHAPKSELLQKELAIFQTARELKDQLGEDIINQHIISHTESVSDMFELAIMLKEVGLIDANQARIQIVPLFETIEDLDNSRDIMTQYLHYELVKKWIATNNNYQEIMLGYSDSNKDGGYLSSGWTLYKAQNELTKIGEENGIKITFFHGRGGTVGRGGGPSYEAITSQPFGSIKDRIRLTEQGEIIENKYGNQDAAYYNLEMLISASIDRMVTRMITNPNEIDNFRETMDGIVSESNAVYRNLVFDNPYFYDYFFEASPIKEVSSLNIGSRPAARKTITEISGLRAIPWVFSWSQNRIMFPGWYGVGSAFKHFIEQDEANLAKLQTMYQKWPFFNSLLSNVDMVLSKSNMNIALQYAQLAGSKEVRDVFNIILNEWQLTKDMILAIEQHDNLLEENPMLHASLDYRLPYFNVLNYVQIELIKRLRSNQLDEDYEKLIHITINGIATGLRNSG.

Catalysis depends on residues His138 and Lys594.

The protein belongs to the PEPCase type 1 family. Mg(2+) is required as a cofactor.

It catalyses the reaction oxaloacetate + phosphate = phosphoenolpyruvate + hydrogencarbonate. Functionally, forms oxaloacetate, a four-carbon dicarboxylic acid source for the tricarboxylic acid cycle. The chain is Phosphoenolpyruvate carboxylase from Streptococcus agalactiae serotype Ia (strain ATCC 27591 / A909 / CDC SS700).